Here is a 367-residue protein sequence, read N- to C-terminus: tRNA-specific 2-thiouridylase MnmA (367 aa).

Residues 12–19 (GMSGGVDS) and Met38 each bind ATP. The segment at 98 to 100 (NPD) is interaction with target base in tRNA. Cys103 functions as the Nucleophile in the catalytic mechanism. Cys103 and Cys200 are oxidised to a cystine. Gly128 provides a ligand contact to ATP. The interaction with tRNA stretch occupies residues 150–152 (KDQ). Cys200 serves as the catalytic Cysteine persulfide intermediate. The tract at residues 312-313 (RY) is interaction with tRNA.

It belongs to the MnmA/TRMU family. Interacts with TusE.

Its subcellular location is the cytoplasm. The catalysed reaction is S-sulfanyl-L-cysteinyl-[protein] + uridine(34) in tRNA + AH2 + ATP = 2-thiouridine(34) in tRNA + L-cysteinyl-[protein] + A + AMP + diphosphate + H(+). Catalyzes the 2-thiolation of uridine at the wobble position (U34) of tRNA(Lys), tRNA(Glu) and tRNA(Gln), leading to the formation of s(2)U34, the first step of tRNA-mnm(5)s(2)U34 synthesis. Sulfur is provided by IscS, via a sulfur-relay system. Binds ATP and its substrate tRNAs. The polypeptide is tRNA-specific 2-thiouridylase MnmA (Proteus mirabilis (strain HI4320)).